Reading from the N-terminus, the 264-residue chain is Thymidylate synthase (264 aa).

Position 21 (Arg21) interacts with dUMP. (6R)-5,10-methylene-5,6,7,8-tetrahydrofolate is bound at residue His51. A dUMP-binding site is contributed by 126–127 (RR). Cys146 acts as the Nucleophile in catalysis. DUMP is bound by residues 166–169 (RSCD), Asn177, and 207–209 (HLY). Asp169 lines the (6R)-5,10-methylene-5,6,7,8-tetrahydrofolate pocket. Ala263 provides a ligand contact to (6R)-5,10-methylene-5,6,7,8-tetrahydrofolate.

Belongs to the thymidylate synthase family. Bacterial-type ThyA subfamily. As to quaternary structure, homodimer.

Its subcellular location is the cytoplasm. It catalyses the reaction dUMP + (6R)-5,10-methylene-5,6,7,8-tetrahydrofolate = 7,8-dihydrofolate + dTMP. The protein operates within pyrimidine metabolism; dTTP biosynthesis. Functionally, catalyzes the reductive methylation of 2'-deoxyuridine-5'-monophosphate (dUMP) to 2'-deoxythymidine-5'-monophosphate (dTMP) while utilizing 5,10-methylenetetrahydrofolate (mTHF) as the methyl donor and reductant in the reaction, yielding dihydrofolate (DHF) as a by-product. This enzymatic reaction provides an intracellular de novo source of dTMP, an essential precursor for DNA biosynthesis. The polypeptide is Thymidylate synthase (Citrobacter koseri (strain ATCC BAA-895 / CDC 4225-83 / SGSC4696)).